The primary structure comprises 603 residues: DNA mismatch repair protein MutL (603 aa).

The span at 337–347 (ISKKQKEDQKS) shows a compositional bias: basic and acidic residues. A disordered region spans residues 337–383 (ISKKQKEDQKSEQIQMSFEENKPVKETPTLFSKPTIPEYVPSDEDAP).

It belongs to the DNA mismatch repair MutL/HexB family.

In terms of biological role, this protein is involved in the repair of mismatches in DNA. It is required for dam-dependent methyl-directed DNA mismatch repair. May act as a 'molecular matchmaker', a protein that promotes the formation of a stable complex between two or more DNA-binding proteins in an ATP-dependent manner without itself being part of a final effector complex. This Listeria monocytogenes serotype 4b (strain F2365) protein is DNA mismatch repair protein MutL.